The following is a 216-amino-acid chain: TATA-box-binding protein-like 1 (216 aa).

A run of 2 repeats spans residues 38–121 (KPVI…QRLG) and 126–210 (FNHF…ILLQ).

It belongs to the TBP family.

The protein resides in the nucleus. In terms of biological role, TATA box-binding transcription factor. Members of the TBP family are differentially required to regulate transcription and development during early embryogenesis. The chain is TATA-box-binding protein-like 1 (trf1) from Entamoeba histolytica (strain ATCC 30459 / HM-1:IMSS / ABRM).